We begin with the raw amino-acid sequence, 329 residues long: Delta-aminolevulinic acid dehydratase (329 aa).

Zn(2+)-binding residues include cysteine 122, cysteine 124, and cysteine 132. The Schiff-base intermediate with substrate role is filled by lysine 199. Arginine 209 and arginine 221 together coordinate 5-aminolevulinate. Catalysis depends on lysine 252, which acts as the Schiff-base intermediate with substrate. 5-aminolevulinate contacts are provided by serine 279 and tyrosine 318.

This sequence belongs to the ALAD family. As to quaternary structure, homooctamer. Zn(2+) serves as cofactor.

The enzyme catalyses 2 5-aminolevulinate = porphobilinogen + 2 H2O + H(+). Its pathway is porphyrin-containing compound metabolism; protoporphyrin-IX biosynthesis; coproporphyrinogen-III from 5-aminolevulinate: step 1/4. Catalyzes an early step in the biosynthesis of tetrapyrroles. Binds two molecules of 5-aminolevulinate per subunit, each at a distinct site, and catalyzes their condensation to form porphobilinogen. This Schizosaccharomyces pombe (strain 972 / ATCC 24843) (Fission yeast) protein is Delta-aminolevulinic acid dehydratase (hem2).